The chain runs to 287 residues: 4-hydroxybenzoate octaprenyltransferase (287 aa).

The next 9 helical transmembrane spans lie at 22 to 42 (IGTY…SDGW), 45 to 65 (LQLL…GCVI), 95 to 115 (AINL…MLSW), 116 to 136 (STIY…FMKR), 140 to 160 (LPQL…FSEA), 162 to 182 (GEIP…TIAY), 214 to 234 (IGFL…ILAF), 237 to 257 (PYQL…LLIV), and 264 to 284 (CFQA…GIAI).

It belongs to the UbiA prenyltransferase family. Mg(2+) is required as a cofactor.

Its subcellular location is the cell inner membrane. The catalysed reaction is all-trans-octaprenyl diphosphate + 4-hydroxybenzoate = 4-hydroxy-3-(all-trans-octaprenyl)benzoate + diphosphate. It participates in cofactor biosynthesis; ubiquinone biosynthesis. Catalyzes the prenylation of para-hydroxybenzoate (PHB) with an all-trans polyprenyl group. Mediates the second step in the final reaction sequence of ubiquinone-8 (UQ-8) biosynthesis, which is the condensation of the polyisoprenoid side chain with PHB, generating the first membrane-bound Q intermediate 3-octaprenyl-4-hydroxybenzoate. This chain is 4-hydroxybenzoate octaprenyltransferase, found in Colwellia psychrerythraea (strain 34H / ATCC BAA-681) (Vibrio psychroerythus).